The primary structure comprises 422 residues: Chorismate synthase (422 aa).

R43 and R49 together coordinate NADP(+). FMN contacts are provided by residues 143–145 (RSS), 264–265 (QA), G309, 324–328 (KPIST), and R350.

This sequence belongs to the chorismate synthase family. In terms of assembly, homotetramer. FMNH2 is required as a cofactor.

It carries out the reaction 5-O-(1-carboxyvinyl)-3-phosphoshikimate = chorismate + phosphate. The protein operates within metabolic intermediate biosynthesis; chorismate biosynthesis; chorismate from D-erythrose 4-phosphate and phosphoenolpyruvate: step 7/7. Catalyzes the anti-1,4-elimination of the C-3 phosphate and the C-6 proR hydrogen from 5-enolpyruvylshikimate-3-phosphate (EPSP) to yield chorismate, which is the branch point compound that serves as the starting substrate for the three terminal pathways of aromatic amino acid biosynthesis. This reaction introduces a second double bond into the aromatic ring system. The polypeptide is Chorismate synthase (Corynebacterium jeikeium (strain K411)).